Reading from the N-terminus, the 78-residue chain is Large ribosomal subunit protein bL28 (78 aa).

Belongs to the bacterial ribosomal protein bL28 family.

The chain is Large ribosomal subunit protein bL28 from Salmonella choleraesuis (strain SC-B67).